A 246-amino-acid chain; its full sequence is mRNA-decapping protein g5R (246 aa).

Residues 93-239 (QKFRKNWLLP…IIGPAFNFIK (147 aa)) enclose the Nudix hydrolase domain. The short motif at 128 to 149 (GKPKEDESDLTCAIREFEEETG) is the Nudix box element. Glu-134 provides a ligand contact to Mg(2+). Glu-143 (nucleophile) is an active-site residue. Residues Glu-147 and Asp-169 each contribute to the Mg(2+) site.

Belongs to the Nudix hydrolase family. DIPP subfamily. Interacts with host RPL23A. Mg(2+) serves as cofactor. Mn(2+) is required as a cofactor.

It is found in the host rough endoplasmic reticulum. It catalyses the reaction diphospho-myo-inositol polyphosphate + H2O = myo-inositol polyphosphate + phosphate.. In terms of biological role, decapping enzyme required for the removal of the 5'-end m7GpppN cap tethered to viral and host mRNAs to allow their decay in cells. May therefore accelerate viral and cellular mRNA turnover to eliminate competing host mRNAs and allow stage-specific synthesis of viral proteins. Acceleration of the turnover of cellular transcripts may even promote the shutoff of host protein synthesis. In addition to the mRNA cap, g5R also efficiently hydrolyzes diphosphoinositol polyphosphates. Down-regulation of the level of PP-InsP5 (diphosphoinositol pentakisphosphate) may play a role in viral manipulation of the cellular secretory pathway, a step necessary for the formation of virions. Binds viral and cellular poly(A) mRNAs, thereby decreasing both types of mRNAs. The sequence is that of mRNA-decapping protein g5R from African swine fever virus (isolate Warthog/Namibia/Wart80/1980) (ASFV).